A 420-amino-acid polypeptide reads, in one-letter code: ATP phosphoribosyltransferase regulatory subunit (420 aa).

Belongs to the class-II aminoacyl-tRNA synthetase family. HisZ subfamily. Heteromultimer composed of HisG and HisZ subunits.

The protein resides in the cytoplasm. Its pathway is amino-acid biosynthesis; L-histidine biosynthesis; L-histidine from 5-phospho-alpha-D-ribose 1-diphosphate: step 1/9. Required for the first step of histidine biosynthesis. May allow the feedback regulation of ATP phosphoribosyltransferase activity by histidine. This is ATP phosphoribosyltransferase regulatory subunit from Bacillus cereus (strain AH820).